The following is a 97-amino-acid chain: uncharacterized protein (97 aa).

This is an uncharacterized protein from Escherichia coli (Bacteriophage T4).